Consider the following 1148-residue polypeptide: Minor outer capsid protein P2 (1148 aa).

A PPPDE domain is found at 930–1148 (QDGTANIFQK…QYIQSIYDEL (219 aa)). Active-site residues include His-954 and Cys-1111.

Belongs to the phytoreovirus minor outer capsid protein P2 family.

The protein resides in the virion. It is found in the host cytoplasm. Functionally, minor capsid protein present in the outer capsid, which is required for adsorption of the virus onto host insect cells. The polypeptide is Minor outer capsid protein P2 (Nephotettix cincticeps (Green rice leafhopper)).